The chain runs to 66 residues: Large ribosomal subunit protein bL33c (66 aa).

This sequence belongs to the bacterial ribosomal protein bL33 family.

The protein resides in the plastid. Its subcellular location is the chloroplast. The sequence is that of Large ribosomal subunit protein bL33c from Nasturtium officinale (Watercress).